A 132-amino-acid chain; its full sequence is Small ribosomal subunit protein uS8 (132 aa).

This sequence belongs to the universal ribosomal protein uS8 family. In terms of assembly, part of the 30S ribosomal subunit. Contacts proteins S5 and S12.

Functionally, one of the primary rRNA binding proteins, it binds directly to 16S rRNA central domain where it helps coordinate assembly of the platform of the 30S subunit. The chain is Small ribosomal subunit protein uS8 from Streptomyces avermitilis (strain ATCC 31267 / DSM 46492 / JCM 5070 / NBRC 14893 / NCIMB 12804 / NRRL 8165 / MA-4680).